The chain runs to 252 residues: Large ribosomal subunit protein uL4 (252 aa).

Belongs to the universal ribosomal protein uL4 family. As to quaternary structure, part of the 50S ribosomal subunit.

Functionally, one of the primary rRNA binding proteins, this protein initially binds near the 5'-end of the 23S rRNA. It is important during the early stages of 50S assembly. It makes multiple contacts with different domains of the 23S rRNA in the assembled 50S subunit and ribosome. In terms of biological role, forms part of the polypeptide exit tunnel. The polypeptide is Large ribosomal subunit protein uL4 (Methanocaldococcus jannaschii (strain ATCC 43067 / DSM 2661 / JAL-1 / JCM 10045 / NBRC 100440) (Methanococcus jannaschii)).